The following is a 173-amino-acid chain: Lipoprotein signal peptidase (173 aa).

The next 3 helical transmembrane spans lie at 11-31 (FGLI…WIVT), 69-89 (TTRW…AFWM), and 93-113 (QAKG…GNIV). Catalysis depends on residues aspartate 123 and aspartate 142. The chain crosses the membrane as a helical span at residues 134 to 154 (PFMIFNVADACITIGVLLLVA).

It belongs to the peptidase A8 family.

It is found in the cell inner membrane. It catalyses the reaction Release of signal peptides from bacterial membrane prolipoproteins. Hydrolyzes -Xaa-Yaa-Zaa-|-(S,diacylglyceryl)Cys-, in which Xaa is hydrophobic (preferably Leu), and Yaa (Ala or Ser) and Zaa (Gly or Ala) have small, neutral side chains.. It participates in protein modification; lipoprotein biosynthesis (signal peptide cleavage). Functionally, this protein specifically catalyzes the removal of signal peptides from prolipoproteins. This is Lipoprotein signal peptidase from Sphingopyxis alaskensis (strain DSM 13593 / LMG 18877 / RB2256) (Sphingomonas alaskensis).